The following is a 1067-amino-acid chain: Zinc finger MIZ domain-containing protein 1 (1067 aa).

Positions 1–120 (MNSMDRHIQQ…HQKSRQSDPP (120 aa)) are sufficient for transactivation activity; sufficient for interaction with NOTCH1. A Glycyl lysine isopeptide (Lys-Gly) (interchain with G-Cter in SUMO2) cross-link involves residue Lys91. 2 disordered regions span residues 112 to 141 (QKSR…TLSH) and 327 to 542 (NSQF…PFPP). Low complexity predominate over residues 128–141 (PLSSMSSMKPTLSH). Over residues 413–429 (YGNQQYGPNSQFPTQPG) the composition is skewed to polar residues. Pro residues predominate over residues 431–440 (YPAPNPPRPL). The span at 479–497 (NNTFSGSSYSNYSQGNVNR) shows a compositional bias: low complexity. The segment covering 510 to 521 (SPVPGNPTPPMT) has biased composition (pro residues). The segment at 727 to 808 (GEDGVEQTAI…MWGILNAIQH (82 aa)) adopts an SP-RING-type zinc-finger fold. Zn(2+)-binding residues include Cys758, His760, Cys781, and Cys784. Residues Lys834 and Lys843 each participate in a glycyl lysine isopeptide (Lys-Gly) (interchain with G-Cter in SUMO2) cross-link. A transactivation domain region spans residues 837–1067 (PDGIPSKRFK…DDLLSLFENN (231 aa)). A compositionally biased stretch (pro residues) spans 868 to 879 (GPSPYPLPPPPG). The interval 868 to 1067 (GPSPYPLPPP…DDLLSLFENN (200 aa)) is disordered. Polar residues-rich tracts occupy residues 881–895 (TNSN…NYQG) and 951–961 (SSDQPHPSIQQ). Residues 981–996 (APPPPPSQPPRQPPQA) show a composition bias toward pro residues. Low complexity predominate over residues 1040 to 1067 (PDELLSYLDPPDLPSNSNDDLLSLFENN).

In terms of assembly, interacts with AR, but not with ESR1, NR3C1, PGR, THRB nor VDR. Interacts with NOTCH1 and RBPJ. Interacts with SMARCA4. Interacts (via SP-RING-type domain) with SMAD3 and SMAD4 (via MH2 domain). In terms of tissue distribution, expressed most abundantly in ovary and, at lower levels, in prostate, spleen and testis. Weak expression, if any, in thymus, small intestine, colon and peripheral blood leukocytes.

Its subcellular location is the nucleus. The protein resides in the nucleoplasm. The protein localises to the cytoplasm. Its function is as follows. Acts as a transcriptional coactivator. Increases ligand-dependent transcriptional activity of AR and promotes AR sumoylation. The stimulation of AR activity is dependent upon sumoylation. Also functions as a transcriptional coactivator in the TGF-beta signaling pathway by increasing the activity of the SMAD3/SMAD4 transcriptional complex. Involved in transcriptional activation of a subset of NOTCH1 target genes including MYC. Involved in thymocyte and T cell development. Involved in the regulation of postmitotic positioning of pyramidal neurons in the developing cerebral cortex. The sequence is that of Zinc finger MIZ domain-containing protein 1 from Homo sapiens (Human).